The primary structure comprises 154 residues: Small ribosomal subunit protein uS19B (154 aa).

Ser-63 carries the phosphoserine modification.

It belongs to the universal ribosomal protein uS19 family. As to quaternary structure, component of the small ribosomal subunit (SSU). Mature yeast ribosomes consist of a small (40S) and a large (60S) subunit. The 40S small subunit contains 1 molecule of ribosomal RNA (18S rRNA) and at least 33 different proteins. The large 60S subunit contains 3 rRNA molecules (25S, 5.8S and 5S rRNA) and at least 46 different proteins.

The protein localises to the cytoplasm. Its subcellular location is the nucleus. It localises to the nucleolus. Functionally, component of the ribosome, a large ribonucleoprotein complex responsible for the synthesis of proteins in the cell. The small ribosomal subunit (SSU) binds messenger RNAs (mRNAs) and translates the encoded message by selecting cognate aminoacyl-transfer RNA (tRNA) molecules. The large subunit (LSU) contains the ribosomal catalytic site termed the peptidyl transferase center (PTC), which catalyzes the formation of peptide bonds, thereby polymerizing the amino acids delivered by tRNAs into a polypeptide chain. The nascent polypeptides leave the ribosome through a tunnel in the LSU and interact with protein factors that function in enzymatic processing, targeting, and the membrane insertion of nascent chains at the exit of the ribosomal tunnel. uS19 is involved in the nuclear export of the small ribosomal subunit precursor. Has a role in the late stage of the assembly of pre-40S particles within the nucleus and controls their export to the cytoplasm. In Schizosaccharomyces pombe (strain 972 / ATCC 24843) (Fission yeast), this protein is Small ribosomal subunit protein uS19B (rps1502).